The primary structure comprises 131 residues: Sec-independent protein translocase protein TatB (131 aa).

Residues 2 to 22 form a helical membrane-spanning segment; that stretch reads FANIGWGEMLVLVMVGLVVLG. The interval 90-131 is disordered; the sequence is DSLFTGDFDRPTPKKPDAAGSAGPDATEQIGAGPIPFDSDAT. Over residues 96–106 the composition is skewed to basic and acidic residues; sequence DFDRPTPKKPD.

It belongs to the TatB family. As to quaternary structure, the Tat system comprises two distinct complexes: a TatABC complex, containing multiple copies of TatA, TatB and TatC subunits, and a separate TatA complex, containing only TatA subunits. Substrates initially bind to the TatABC complex, which probably triggers association of the separate TatA complex to form the active translocon.

Its subcellular location is the cell membrane. Functionally, part of the twin-arginine translocation (Tat) system that transports large folded proteins containing a characteristic twin-arginine motif in their signal peptide across membranes. Together with TatC, TatB is part of a receptor directly interacting with Tat signal peptides. TatB may form an oligomeric binding site that transiently accommodates folded Tat precursor proteins before their translocation. The chain is Sec-independent protein translocase protein TatB from Mycobacterium bovis (strain ATCC BAA-935 / AF2122/97).